The sequence spans 562 residues: Isochorismate synthase 2, chloroplastic (562 aa).

Residues 1–55 constitute a chloroplast transit peptide; the sequence is MASLQCSFHFLGTNPKKYNPSSIFQSYSRTSFTKLSSRVSRQRFLRCTLSMNGCE.

It belongs to the isochorismate synthase family. Mg(2+) is required as a cofactor.

It is found in the plastid. The protein resides in the chloroplast. The enzyme catalyses chorismate = isochorismate. The protein operates within siderophore biosynthesis; salicylate biosynthesis. Isochorismate synthase involved in the synthesis of salicylic acid (SA) required for both local and systemic acquired resistance (LAR and SAR) while SA synthesized through the phenylalanine ammonium lyase (PAL) pathway seems to potentiate plant cell death. Also involved in phylloquinone (vitamin K1) synthesis. Has no isochorismate pyruvate lyase (IPL) activity. In Arabidopsis thaliana (Mouse-ear cress), this protein is Isochorismate synthase 2, chloroplastic (ICS2).